Consider the following 483-residue polypeptide: Zinc metalloproteinase/disintegrin VMP-II (483 aa).

A signal peptide spans 1–20 (MIQVLLVTLCLAAFPYQGNS). The propeptide occupies 21 to 191 (IILESGNVND…KASQLNLTPE (171 aa)). Residues 198 to 394 (RYIELVVVAD…HNPQCMLNEP (197 aa)) form the Peptidase M12B domain. Residues Glu201 and Asp285 each contribute to the Ca(2+) site. 3 cysteine pairs are disulfide-bonded: Cys309/Cys389, Cys349/Cys373, and Cys351/Cys356. His334 provides a ligand contact to Zn(2+). The active site involves Glu335. Residues His338 and His344 each coordinate Zn(2+). Ca(2+) is bound by residues Cys389 and Asn392. A propeptide spanning residues 395–414 (LRTDIVSTPVSGNELWETGE) is cleaved from the precursor. The 82-residue stretch at 402–483 (TPVSGNELWE…AGCPRNPFHA (82 aa)) folds into the Disintegrin domain. Disulfide bonds link Cys425/Cys448, Cys439/Cys445, Cys444/Cys469, and Cys457/Cys476. The short motif at 461–463 (KGD) is the Cell attachment site; atypical (KGD) element.

The protein belongs to the venom metalloproteinase (M12B) family. P-II subfamily. P-IIe sub-subfamily. Heterodimer; disulfide-linked (disintegrin). Zn(2+) is required as a cofactor. As to expression, expressed by the venom gland.

The protein resides in the secreted. Its activity is regulated as follows. Inhibited by EDTA and 1,10-phenanthroline, but not by PMSF. Its function is as follows. Has fibrinolytic activity. The recombinant enzyme cleaves both alpha- (FGA) and beta-chains (FGB) of fibrinogen, but not the gamma-chain. The recombinant protein does not produce hemorrhage in mice and does not have effect on ADP- or collagen-stimulated platelet aggregation. Functionally, inhibits platelet aggregation induced by ADP, thrombin, platelet-activating factor and collagen. Acts by inhibiting fibrinogen interaction with platelet receptors GPIIb/GPIIIa (ITGA2B/ITGB3). The protein is Zinc metalloproteinase/disintegrin VMP-II of Agkistrodon piscivorus leucostoma (Western cottonmouth).